Reading from the N-terminus, the 160-residue chain is 6,7-dimethyl-8-ribityllumazine synthase (160 aa).

5-amino-6-(D-ribitylamino)uracil contacts are provided by residues tryptophan 26, 59–61 (AVE), and 81–83 (VVI). A (2S)-2-hydroxy-3-oxobutyl phosphate-binding site is contributed by 86 to 87 (GT). Histidine 89 functions as the Proton donor in the catalytic mechanism. Phenylalanine 114 is a binding site for 5-amino-6-(D-ribitylamino)uracil. Arginine 128 lines the (2S)-2-hydroxy-3-oxobutyl phosphate pocket.

This sequence belongs to the DMRL synthase family.

The catalysed reaction is (2S)-2-hydroxy-3-oxobutyl phosphate + 5-amino-6-(D-ribitylamino)uracil = 6,7-dimethyl-8-(1-D-ribityl)lumazine + phosphate + 2 H2O + H(+). Its pathway is cofactor biosynthesis; riboflavin biosynthesis; riboflavin from 2-hydroxy-3-oxobutyl phosphate and 5-amino-6-(D-ribitylamino)uracil: step 1/2. Functionally, catalyzes the formation of 6,7-dimethyl-8-ribityllumazine by condensation of 5-amino-6-(D-ribitylamino)uracil with 3,4-dihydroxy-2-butanone 4-phosphate. This is the penultimate step in the biosynthesis of riboflavin. The protein is 6,7-dimethyl-8-ribityllumazine synthase of Frankia casuarinae (strain DSM 45818 / CECT 9043 / HFP020203 / CcI3).